Consider the following 203-residue polypeptide: Outer-membrane lipoprotein LolB (203 aa).

Residues 1 to 20 form the signal peptide; the sequence is MNRSRRLALLCLGVPLLLQA. Cysteine 21 is lipidated: N-palmitoyl cysteine. The S-diacylglycerol cysteine moiety is linked to residue cysteine 21.

Belongs to the LolB family. Monomer.

The protein localises to the cell outer membrane. Functionally, plays a critical role in the incorporation of lipoproteins in the outer membrane after they are released by the LolA protein. The sequence is that of Outer-membrane lipoprotein LolB from Cupriavidus taiwanensis (strain DSM 17343 / BCRC 17206 / CCUG 44338 / CIP 107171 / LMG 19424 / R1) (Ralstonia taiwanensis (strain LMG 19424)).